The chain runs to 146 residues: Large ribosomal subunit protein uL16 (146 aa).

The protein belongs to the universal ribosomal protein uL16 family. Part of the 50S ribosomal subunit.

Binds 23S rRNA and is also seen to make contacts with the A and possibly P site tRNAs. The sequence is that of Large ribosomal subunit protein uL16 from Thermomicrobium roseum (strain ATCC 27502 / DSM 5159 / P-2).